Here is a 225-residue protein sequence, read N- to C-terminus: Uracil-DNA glycosylase (225 aa).

D64 serves as the catalytic Proton acceptor.

It belongs to the uracil-DNA glycosylase (UDG) superfamily. UNG family.

It is found in the cytoplasm. The enzyme catalyses Hydrolyzes single-stranded DNA or mismatched double-stranded DNA and polynucleotides, releasing free uracil.. In terms of biological role, excises uracil residues from the DNA which can arise as a result of misincorporation of dUMP residues by DNA polymerase or due to deamination of cytosine. This Lachnoclostridium phytofermentans (strain ATCC 700394 / DSM 18823 / ISDg) (Clostridium phytofermentans) protein is Uracil-DNA glycosylase.